A 2464-amino-acid chain; its full sequence is Highly reducing polyketide synthase xilA (2464 aa).

One can recognise a Ketosynthase family 3 (KS3) domain in the interval H9–H437. Residues C182, H318, and H360 each act as for beta-ketoacyl synthase activity in the active site. A compositionally biased stretch (low complexity) spans Q461–G487. The segment at Q461–A495 is disordered. The region spanning F589–L911 is the Malonyl-CoA:ACP transacylase (MAT) domain. The N-terminal hotdog fold stretch occupies residues H983 to F1121. The PKS/mFAS DH domain maps to H983–S1286. The Proton acceptor; for dehydratase activity role is filled by H1015. The C-terminal hotdog fold stretch occupies residues G1133–S1286. D1199 serves as the catalytic Proton donor; for dehydratase activity. The methyltransferase (CMeT) domain stretch occupies residues N1282 to T1490. Residues G1716 to I2028 form the Enoyl reductase (ER) domain. Positions A2052–N2231 constitute a Ketoreductase (KR) domain. In terms of domain architecture, Carrier spans E2383–A2461. S2420 carries the O-(pantetheine 4'-phosphoryl)serine modification.

Requires pantetheine 4'-phosphate as cofactor.

Its pathway is secondary metabolite biosynthesis. Functionally, highly reducing polyketide synthase; part of the gene cluster that mediates the biosynthesis of the 6-methyl-2-pyrone derivative xylariolide D. XilA produces the 5-alkyl-6-methyl-2-pyrone backbone called prexylariolide D via sequential condensations of 4 malonyl-CoA units with one acetyl-CoA starter unit. During the biosynthesis, the linear polyketide chain is branched by the addition of an acetyl unit as the origin of the methyl group at the 2-pyrone ring. Prexylariolide D is then hydroxylated at the side chain by xilC to form the final product, xylariolide D. This is Highly reducing polyketide synthase xilA from Penicillium rubens (strain ATCC 28089 / DSM 1075 / NRRL 1951 / Wisconsin 54-1255) (Penicillium chrysogenum).